Here is a 967-residue protein sequence, read N- to C-terminus: uncharacterized protein (967 aa).

2 disordered regions span residues 1 to 23 (MQNA…FHDR) and 41 to 72 (FTMH…DPRT). Residues 14–23 (KGRDVNFHDR) are compositionally biased toward basic and acidic residues. A compositionally biased stretch (polar residues) spans 60 to 72 (RLSNYSSAVDPRT). At Ser86 the chain carries Phosphoserine. Disordered stretches follow at residues 135–259 (AVSE…QHLP), 271–296 (SVSR…SPPE), 380–399 (DSTT…APHK), 437–464 (HSYG…FVAD), and 499–544 (GTRF…KSLS). Residues 162–187 (ESSTSNNLETGNSTNTALHNVSSPLE) are compositionally biased toward polar residues. Basic and acidic residues predominate over residues 205-218 (HDLDEVISEKDTSL). The segment covering 221-234 (RSSRGRSSAPKRRK) has biased composition (basic residues). Residues 278–294 (SPASTPRSSVSSVSSSP) show a composition bias toward low complexity. The segment covering 382 to 394 (TTEYVNTESSSKT) has biased composition (polar residues). Residues 499–508 (GTRFHSRSSH) show a composition bias toward basic residues. A Phosphoserine modification is found at Ser585. Disordered stretches follow at residues 594–665 (ESNE…SVND) and 681–708 (DHRI…ESQH). The segment covering 608–622 (YDSRESTGHTIKELR) has biased composition (basic and acidic residues). Over residues 686–704 (ASDNQNNNNNDANALAENS) the composition is skewed to low complexity. A substrate-binding site is contributed by 728–736 (PCVLDVKMG).

This sequence belongs to the inositol phosphokinase (IPK) family.

The protein resides in the cytoplasm. This is an uncharacterized protein from Schizosaccharomyces pombe (strain 972 / ATCC 24843) (Fission yeast).